The chain runs to 242 residues: MVTILSTPLSPRLTFLCETKLSLSRSNRSVCCSLSEEPKDQCLSRRSLVYVLVASPCLLLPALSSSAKTKSKSPYDERRLLEQNKRIQRENNAPDEFPNFVREGFEVKVLASDNYIKADSGLIYRDFNVGQGDFPKDGQQVTFHYIGYNESGRRIDSTYIQGSPARIRMGTNALVPGFEMGIRDMKPGGRRRIIIPPELGPPVGPSTFFSSKQFEVFDVELLSIQNCERRTIIGFYSDVTCS.

The transit peptide at 1–31 (MVTILSTPLSPRLTFLCETKLSLSRSNRSVC) directs the protein to the chloroplast. The transit peptide at 32–67 (CSLSEEPKDQCLSRRSLVYVLVASPCLLLPALSSSA) directs the protein to the thylakoid. Residues 138 to 225 (GQQVTFHYIG…VFDVELLSIQ (88 aa)) enclose the PPIase FKBP-type domain. Cys227 and Cys241 are oxidised to a cystine.

This sequence belongs to the FKBP-type PPIase family. In terms of assembly, interacts in vitro with LTO1.

It is found in the plastid. Its subcellular location is the chloroplast thylakoid lumen. The catalysed reaction is [protein]-peptidylproline (omega=180) = [protein]-peptidylproline (omega=0). Functionally, PPIases accelerate the folding of proteins. It catalyzes the cis-trans isomerization of proline imidic peptide bonds in oligopeptides. Involved in the accumulation of the PSII complex. This is Peptidyl-prolyl cis-trans isomerase FKBP20-2, chloroplastic from Arabidopsis thaliana (Mouse-ear cress).